Here is a 314-residue protein sequence, read N- to C-terminus: Ribosomal protein uL3 glutamine methyltransferase (314 aa).

It belongs to the protein N5-glutamine methyltransferase family. PrmB subfamily.

The catalysed reaction is L-glutaminyl-[ribosomal protein uL3] + S-adenosyl-L-methionine = N(5)-methyl-L-glutaminyl-[ribosomal protein uL3] + S-adenosyl-L-homocysteine + H(+). In terms of biological role, methylates large ribosomal subunit protein uL3 on a specific glutamine residue. The protein is Ribosomal protein uL3 glutamine methyltransferase of Vibrio cholerae serotype O1 (strain ATCC 39315 / El Tor Inaba N16961).